The chain runs to 275 residues: Nitrogenase iron protein 1 (275 aa).

9–16 (GKGGIGKS) serves as a coordination point for ATP. C97 contacts [4Fe-4S] cluster. An ADP-ribosylarginine; by dinitrogenase reductase ADP-ribosyltransferase modification is found at R100. C132 contributes to the [4Fe-4S] cluster binding site.

This sequence belongs to the NifH/BchL/ChlL family. Homodimer. [4Fe-4S] cluster is required as a cofactor. Post-translationally, the reversible ADP-ribosylation of Arg-100 inactivates the nitrogenase reductase and regulates nitrogenase activity.

The enzyme catalyses N2 + 8 reduced [2Fe-2S]-[ferredoxin] + 16 ATP + 16 H2O = H2 + 8 oxidized [2Fe-2S]-[ferredoxin] + 2 NH4(+) + 16 ADP + 16 phosphate + 6 H(+). The key enzymatic reactions in nitrogen fixation are catalyzed by the nitrogenase complex, which has 2 components: the iron protein and the molybdenum-iron protein. This chain is Nitrogenase iron protein 1 (nifH1), found in Methanothermobacter thermautotrophicus (strain ATCC 29096 / DSM 1053 / JCM 10044 / NBRC 100330 / Delta H) (Methanobacterium thermoautotrophicum).